A 639-amino-acid polypeptide reads, in one-letter code: Threonine--tRNA ligase (639 aa).

Residues Met-1–Thr-61 enclose the TGS domain. A catalytic region spans residues Asp-242 to Pro-533. 3 residues coordinate Zn(2+): Cys-333, His-384, and His-510.

It belongs to the class-II aminoacyl-tRNA synthetase family. As to quaternary structure, homodimer. Zn(2+) serves as cofactor.

It is found in the cytoplasm. It carries out the reaction tRNA(Thr) + L-threonine + ATP = L-threonyl-tRNA(Thr) + AMP + diphosphate + H(+). Functionally, catalyzes the attachment of threonine to tRNA(Thr) in a two-step reaction: L-threonine is first activated by ATP to form Thr-AMP and then transferred to the acceptor end of tRNA(Thr). Also edits incorrectly charged L-seryl-tRNA(Thr). The sequence is that of Threonine--tRNA ligase from Acidovorax ebreus (strain TPSY) (Diaphorobacter sp. (strain TPSY)).